Reading from the N-terminus, the 448-residue chain is UDP-N-acetylmuramoylalanine--D-glutamate ligase (448 aa).

Residue 112 to 118 (GSNAKST) participates in ATP binding.

It belongs to the MurCDEF family.

The protein localises to the cytoplasm. The catalysed reaction is UDP-N-acetyl-alpha-D-muramoyl-L-alanine + D-glutamate + ATP = UDP-N-acetyl-alpha-D-muramoyl-L-alanyl-D-glutamate + ADP + phosphate + H(+). The protein operates within cell wall biogenesis; peptidoglycan biosynthesis. Its function is as follows. Cell wall formation. Catalyzes the addition of glutamate to the nucleotide precursor UDP-N-acetylmuramoyl-L-alanine (UMA). This is UDP-N-acetylmuramoylalanine--D-glutamate ligase from Acinetobacter baumannii (strain AB307-0294).